The following is a 226-amino-acid chain: Ribose-5-phosphate isomerase A (226 aa).

Residues 26 to 29 (TGST), 82 to 85 (DGAD), and 95 to 98 (KGGG) contribute to the substrate site. Glutamate 104 acts as the Proton acceptor in catalysis. A substrate-binding site is contributed by lysine 122.

Belongs to the ribose 5-phosphate isomerase family. Homodimer.

The catalysed reaction is aldehydo-D-ribose 5-phosphate = D-ribulose 5-phosphate. The protein operates within carbohydrate degradation; pentose phosphate pathway; D-ribose 5-phosphate from D-ribulose 5-phosphate (non-oxidative stage): step 1/1. Catalyzes the reversible conversion of ribose-5-phosphate to ribulose 5-phosphate. This is Ribose-5-phosphate isomerase A from Streptococcus thermophilus (strain ATCC BAA-250 / LMG 18311).